The sequence spans 523 residues: Siroheme synthase (523 aa).

The tract at residues 1-203 is precorrin-2 dehydrogenase /sirohydrochlorin ferrochelatase; the sequence is MNTFPLFFKL…GNENEAIAQL (203 aa). NAD(+) contacts are provided by residues 22–23 and 43–44; these read DV and PS. Ser128 is subject to Phosphoserine. The uroporphyrinogen-III C-methyltransferase stretch occupies residues 231–523; sequence GEVYIVGAGP…DGGLEQLVID (293 aa). An S-adenosyl-L-methionine-binding site is contributed by Pro240. Residue Asp263 is the Proton acceptor of the active site. The Proton donor role is filled by Lys285. Residues 316–318, Ile321, 346–347, Met398, and Ala427 each bind S-adenosyl-L-methionine; these read GGD and TA.

This sequence in the N-terminal section; belongs to the precorrin-2 dehydrogenase / sirohydrochlorin ferrochelatase family. In the C-terminal section; belongs to the precorrin methyltransferase family.

It carries out the reaction uroporphyrinogen III + 2 S-adenosyl-L-methionine = precorrin-2 + 2 S-adenosyl-L-homocysteine + H(+). The catalysed reaction is precorrin-2 + NAD(+) = sirohydrochlorin + NADH + 2 H(+). The enzyme catalyses siroheme + 2 H(+) = sirohydrochlorin + Fe(2+). It participates in cofactor biosynthesis; adenosylcobalamin biosynthesis; precorrin-2 from uroporphyrinogen III: step 1/1. It functions in the pathway cofactor biosynthesis; adenosylcobalamin biosynthesis; sirohydrochlorin from precorrin-2: step 1/1. The protein operates within porphyrin-containing compound metabolism; siroheme biosynthesis; precorrin-2 from uroporphyrinogen III: step 1/1. Its pathway is porphyrin-containing compound metabolism; siroheme biosynthesis; siroheme from sirohydrochlorin: step 1/1. It participates in porphyrin-containing compound metabolism; siroheme biosynthesis; sirohydrochlorin from precorrin-2: step 1/1. Multifunctional enzyme that catalyzes the SAM-dependent methylations of uroporphyrinogen III at position C-2 and C-7 to form precorrin-2 via precorrin-1. Then it catalyzes the NAD-dependent ring dehydrogenation of precorrin-2 to yield sirohydrochlorin. Finally, it catalyzes the ferrochelation of sirohydrochlorin to yield siroheme. The polypeptide is Siroheme synthase (Psychrobacter cryohalolentis (strain ATCC BAA-1226 / DSM 17306 / VKM B-2378 / K5)).